The chain runs to 195 residues: Molybdenum cofactor guanylyltransferase (195 aa).

Residues 12–14 (LAG), Lys25, Asn53, Asp70, and Asp100 each bind GTP. Asp100 serves as a coordination point for Mg(2+).

This sequence belongs to the MobA family. In terms of assembly, monomer. Mg(2+) serves as cofactor.

It localises to the cytoplasm. It carries out the reaction Mo-molybdopterin + GTP + H(+) = Mo-molybdopterin guanine dinucleotide + diphosphate. Functionally, transfers a GMP moiety from GTP to Mo-molybdopterin (Mo-MPT) cofactor (Moco or molybdenum cofactor) to form Mo-molybdopterin guanine dinucleotide (Mo-MGD) cofactor. In Vibrio vulnificus (strain YJ016), this protein is Molybdenum cofactor guanylyltransferase.